The following is a 226-amino-acid chain: 7-cyano-7-deazaguanine synthase (226 aa).

Residue 9 to 19 (LSGGLDSATVL) coordinates ATP. Cys189, Cys199, Cys202, and Cys205 together coordinate Zn(2+).

It belongs to the QueC family. The cofactor is Zn(2+).

The enzyme catalyses 7-carboxy-7-deazaguanine + NH4(+) + ATP = 7-cyano-7-deazaguanine + ADP + phosphate + H2O + H(+). It participates in purine metabolism; 7-cyano-7-deazaguanine biosynthesis. Functionally, catalyzes the ATP-dependent conversion of 7-carboxy-7-deazaguanine (CDG) to 7-cyano-7-deazaguanine (preQ(0)). The chain is 7-cyano-7-deazaguanine synthase from Cupriavidus pinatubonensis (strain JMP 134 / LMG 1197) (Cupriavidus necator (strain JMP 134)).